We begin with the raw amino-acid sequence, 1037 residues long: Tyrosine-protein kinase-like otk (1037 aa).

The first 22 residues, 1–22 (MAALRISVWILVQALMMALVSS), serve as a signal peptide directing secretion. Asparagine 23 and asparagine 39 each carry an N-linked (GlcNAc...) asparagine glycan. Over 23–582 (NSSHFLQLPQ…GGDGFLVTRA (560 aa)) the chain is Extracellular. Ig-like C2-type domains lie at 25-115 (SHFL…AKLS), 114-200 (LSVI…RVMS), 252-366 (PEDL…APIN), 369-464 (PGTL…VAIN), and 469-559 (PKFS…VQLV). Cystine bridges form between cysteine 46/cysteine 96, cysteine 138/cysteine 189, cysteine 277/cysteine 355, and cysteine 400/cysteine 448. Residues asparagine 337, asparagine 418, asparagine 430, asparagine 445, asparagine 458, asparagine 513, and asparagine 525 are each glycosylated (N-linked (GlcNAc...) asparagine). Cysteine 491 and cysteine 543 are disulfide-bonded. A helical membrane pass occupies residues 583 to 603 (VLITMTVALAYIVLVVGLMLW). Residues 604 to 1037 (CRYRRQARKA…LSKAMQSLEK (434 aa)) lie on the Cytoplasmic side of the membrane. 2 disordered regions span residues 618–681 (LSTK…KKSA) and 719–764 (ATGS…KTSM). Over residues 653–675 (QSRSKSNGDAQKSDDTACSQQSR) the composition is skewed to polar residues. Position 680 is a phosphoserine (serine 680). In terms of domain architecture, Protein kinase; inactive spans 694–1035 (LTELIQIGRG…AALSKAMQSL (342 aa)). Over residues 724–735 (SDKDADTEKQHS) the composition is skewed to basic and acidic residues.

Belongs to the protein kinase superfamily. Tyr protein kinase family. Insulin receptor subfamily. In terms of assembly, interacts with plexA; component of a receptor complex that mediates the repulsive signaling in response to Semaphorin ligands.

It localises to the cell membrane. In terms of biological role, acts as a calcium-dependent, homophilic cell adhesion molecule that regulates neural recognition during the development of the nervous system. Component of the repulsive Plexin signaling response to regulate motor axon guidance at the embryonic stage. Also component of a receptor complex that is required in the adult visual system to innervate the lamina layer; specific targeting of R1-R6 axons. The polypeptide is Tyrosine-protein kinase-like otk (Drosophila ananassae (Fruit fly)).